A 335-amino-acid polypeptide reads, in one-letter code: MDQMSPDNINGVILAVSSSIFIGSSFIIKKKGLKKAGASGVRAGEGGYGYLKEPWWWAGMITMIVGEVANFAAYAFAPAILVTPLGALSIIFSAVLAHFILKEKLHMFGILGCILCVVGSTTIVLHAPHEQKIESVKQIWQLAIEPGFLVYSAVIVIVVAILIFYYEPRYGKTHMIVYVGICSLMGSLTVMSVKAVAIAIKLTFSGTNQFKYFNTWIFILVVATCCILQINYLNKALDTFNTAVISPVYYVMFTTFTIIASMIMFKDWASQSGLKIATELCGFVTILSGTFLLHKTKDMGNSASGRGSISMPTRDTPVFTNSGSGRSSSSDKVAS.

Over 1 to 7 (MDQMSPD) the chain is Extracellular. Residues 8 to 28 (NINGVILAVSSSIFIGSSFII) traverse the membrane as a helical segment. Topologically, residues 29 to 55 (KKKGLKKAGASGVRAGEGGYGYLKEPW) are cytoplasmic. The helical transmembrane segment at 56–76 (WWAGMITMIVGEVANFAAYAF) threads the bilayer. The Extracellular portion of the chain corresponds to 77–79 (APA). The chain crosses the membrane as a helical span at residues 80–100 (ILVTPLGALSIIFSAVLAHFI). Topologically, residues 101-104 (LKEK) are cytoplasmic. The chain crosses the membrane as a helical span at residues 105 to 125 (LHMFGILGCILCVVGSTTIVL). Over 126–143 (HAPHEQKIESVKQIWQLA) the chain is Extracellular. The helical transmembrane segment at 144-164 (IEPGFLVYSAVIVIVVAILIF) threads the bilayer. The Cytoplasmic portion of the chain corresponds to 165–179 (YYEPRYGKTHMIVYV). A helical membrane pass occupies residues 180–200 (GICSLMGSLTVMSVKAVAIAI). Residues 201-212 (KLTFSGTNQFKY) are Extracellular-facing. A helical membrane pass occupies residues 213–233 (FNTWIFILVVATCCILQINYL). Residues 234–244 (NKALDTFNTAV) lie on the Cytoplasmic side of the membrane. The chain crosses the membrane as a helical span at residues 245 to 265 (ISPVYYVMFTTFTIIASMIMF). The Extracellular segment spans residues 266–272 (KDWASQS). The chain crosses the membrane as a helical span at residues 273-293 (GLKIATELCGFVTILSGTFLL). Topologically, residues 294–335 (HKTKDMGNSASGRGSISMPTRDTPVFTNSGSGRSSSSDKVAS) are cytoplasmic. The segment covering 303-321 (ASGRGSISMPTRDTPVFTN) has biased composition (polar residues). A disordered region spans residues 303-335 (ASGRGSISMPTRDTPVFTNSGSGRSSSSDKVAS). Residues 322–335 (SGSGRSSSSDKVAS) show a composition bias toward low complexity.

The protein belongs to the NIPA (TC 2.A.7) family. As to quaternary structure, homodimer.

It is found in the cell membrane. The protein localises to the early endosome. Its function is as follows. Acts as a Mg(2+) transporter. Can also transport other divalent cations such as Fe(2+), Sr(2+), Ba(2+), Mn(2+) and Co(2+) but to a much less extent than Mg(2+). In Arabidopsis thaliana (Mouse-ear cress), this protein is Probable magnesium transporter NIPA1.